The chain runs to 293 residues: 3-hydroxybutyryl-CoA dehydrogenase (293 aa).

The protein belongs to the 3-hydroxyacyl-CoA dehydrogenase family.

The enzyme catalyses (3S)-3-hydroxybutanoyl-CoA + NADP(+) = acetoacetyl-CoA + NADPH + H(+). It functions in the pathway lipid metabolism; butanoate metabolism. The sequence is that of 3-hydroxybutyryl-CoA dehydrogenase (hbdA) from Bradyrhizobium diazoefficiens (strain JCM 10833 / BCRC 13528 / IAM 13628 / NBRC 14792 / USDA 110).